Consider the following 189-residue polypeptide: Molybdenum cofactor guanylyltransferase (189 aa).

GTP contacts are provided by residues 10-12 (LAG), lysine 23, asparagine 51, aspartate 69, and aspartate 99. Position 99 (aspartate 99) interacts with Mg(2+).

The protein belongs to the MobA family. Monomer. Requires Mg(2+) as cofactor.

The protein resides in the cytoplasm. The catalysed reaction is Mo-molybdopterin + GTP + H(+) = Mo-molybdopterin guanine dinucleotide + diphosphate. Functionally, transfers a GMP moiety from GTP to Mo-molybdopterin (Mo-MPT) cofactor (Moco or molybdenum cofactor) to form Mo-molybdopterin guanine dinucleotide (Mo-MGD) cofactor. The polypeptide is Molybdenum cofactor guanylyltransferase (Pasteurella multocida (strain Pm70)).